A 100-amino-acid polypeptide reads, in one-letter code: UPF0213 protein YhbQ (100 aa).

Residues 2–77 (TPWFLYLIRT…KQLTKRQKER (76 aa)) form the GIY-YIG domain.

This sequence belongs to the UPF0213 family.

This is UPF0213 protein YhbQ from Shigella dysenteriae serotype 1 (strain Sd197).